The following is a 679-amino-acid chain: Glycine--tRNA ligase beta subunit (679 aa).

The protein belongs to the class-II aminoacyl-tRNA synthetase family. In terms of assembly, tetramer of two alpha and two beta subunits.

The protein localises to the cytoplasm. The enzyme catalyses tRNA(Gly) + glycine + ATP = glycyl-tRNA(Gly) + AMP + diphosphate. This is Glycine--tRNA ligase beta subunit from Thermodesulfovibrio yellowstonii (strain ATCC 51303 / DSM 11347 / YP87).